A 417-amino-acid polypeptide reads, in one-letter code: Arginine biosynthesis bifunctional protein ArgJ (417 aa).

6 residues coordinate substrate: T162, K188, T199, E289, N412, and S417. T199 serves as the catalytic Nucleophile.

The protein belongs to the ArgJ family. In terms of assembly, heterotetramer of two alpha and two beta chains.

The protein resides in the cytoplasm. The enzyme catalyses N(2)-acetyl-L-ornithine + L-glutamate = N-acetyl-L-glutamate + L-ornithine. It catalyses the reaction L-glutamate + acetyl-CoA = N-acetyl-L-glutamate + CoA + H(+). Its pathway is amino-acid biosynthesis; L-arginine biosynthesis; L-ornithine and N-acetyl-L-glutamate from L-glutamate and N(2)-acetyl-L-ornithine (cyclic): step 1/1. It functions in the pathway amino-acid biosynthesis; L-arginine biosynthesis; N(2)-acetyl-L-ornithine from L-glutamate: step 1/4. Catalyzes two activities which are involved in the cyclic version of arginine biosynthesis: the synthesis of N-acetylglutamate from glutamate and acetyl-CoA as the acetyl donor, and of ornithine by transacetylation between N(2)-acetylornithine and glutamate. The polypeptide is Arginine biosynthesis bifunctional protein ArgJ (Nitrobacter winogradskyi (strain ATCC 25391 / DSM 10237 / CIP 104748 / NCIMB 11846 / Nb-255)).